The primary structure comprises 92 residues: MTRSLKKNPFVANHLLRKINKLNTKAEKDIILTWSRASTIIPTMIGHTIAIHNGKEHLPIYITDRMVGHKLGEFSPTLNFRGHAKNDNRSRR.

Belongs to the universal ribosomal protein uS19 family.

Its subcellular location is the plastid. The protein localises to the chloroplast. Functionally, protein S19 forms a complex with S13 that binds strongly to the 16S ribosomal RNA. The polypeptide is Small ribosomal subunit protein uS19c (Phaseolus angularis (Azuki bean)).